Here is a 386-residue protein sequence, read N- to C-terminus: Patatin-B1 (386 aa).

The signal sequence occupies residues 1–23; it reads MATTKSFLILFFMILATTSSTCA. The PNPLA domain maps to 32–229; the sequence is LSIDGGGIKG…TVGDPALLSL (198 aa). Residues 36–41 carry the GXGXXG motif; that stretch reads GGGIKG. The GXSXG signature appears at 75 to 79; sequence GTSTG. Catalysis depends on Ser-77, which acts as the Nucleophile. Asn-115 is a glycosylation site (N-linked (GlcNAc...) asparagine). Asp-215 functions as the Proton acceptor in the catalytic mechanism. The DGA/G signature appears at 215–217; it reads DGG.

The protein belongs to the patatin family.

It is found in the vacuole. Its function is as follows. Probable lipolytic acyl hydrolase (LAH), an activity which is thought to be involved in the response of tubers to pathogens. This is Patatin-B1 (PATB1) from Solanum tuberosum (Potato).